The primary structure comprises 444 residues: MSTILESLPTGQKVGIAFSGGLDTSAALHWMRLKGAVPYAYTANLGQPDEDDYDSIPRRATEYGAEGARLIDCRAQLVAEGIAALQSGAFHISTAGVTYFNTTPIGRAVTGTMLVAAMKEDGVNIWGDGSTYKGNDIERFYRYGLLVNPDLKIYKPWLDQTFIDELGGRAEMSEFMRQSGFAYKMSAEKAYSTDSNLLGATHEAKDLESLESGIKIVNPIMGVAFWRDDVQIAKEEVTVRFEEGQPVALNGKTFPNAVELLLEANRIGGRHGLGMSDQIENRIIEAKSRGIYEAPGLALLFAAYERLVTGIHNEDTIEQYRESGRRLGRLLYQGRWFDPQAIMLRETAQRWVARAITGEVTLELRRGNDYSILSTKSPNLTYQPERLSMEKVASTFSPRDRIGQLTMRNLDITDTRDKLRVYSQVGLLAPGEASALPQIKGDKE.

ATP-binding positions include 17 to 25 (AFSGGLDTS) and Ala43. Residue Tyr99 participates in L-citrulline binding. ATP contacts are provided by Gly129 and Thr131. Residues Thr131, Asn135, and Asp136 each coordinate L-aspartate. Asn135 contacts L-citrulline. ATP is bound at residue Asp136. 2 residues coordinate L-citrulline: Arg139 and Ser192. Asp194 contacts ATP. The L-citrulline site is built by Thr201, Glu203, and Glu280.

Belongs to the argininosuccinate synthase family. Type 2 subfamily. Homotetramer.

The protein localises to the cytoplasm. It carries out the reaction L-citrulline + L-aspartate + ATP = 2-(N(omega)-L-arginino)succinate + AMP + diphosphate + H(+). It functions in the pathway amino-acid biosynthesis; L-arginine biosynthesis; L-arginine from L-ornithine and carbamoyl phosphate: step 2/3. The polypeptide is Argininosuccinate synthase (Paraburkholderia phymatum (strain DSM 17167 / CIP 108236 / LMG 21445 / STM815) (Burkholderia phymatum)).